A 274-amino-acid chain; its full sequence is Outer surface protein A (274 aa).

Positions 1-16 (MKKYLLGIGLILALIA) are cleaved as a signal peptide. Cys-17 carries N-palmitoyl cysteine lipidation. Residue Cys-17 is the site of S-diacylglycerol cysteine attachment.

This sequence belongs to the OspA lipoprotein family.

The protein resides in the cell outer membrane. It is found in the cell surface. The protein is Outer surface protein A of Borreliella burgdorferi (Lyme disease spirochete).